The following is a 372-amino-acid chain: 4-hydroxy-3-methylbut-2-en-1-yl diphosphate synthase (flavodoxin) (372 aa).

[4Fe-4S] cluster-binding residues include C270, C273, C305, and E312.

This sequence belongs to the IspG family. The cofactor is [4Fe-4S] cluster.

The enzyme catalyses (2E)-4-hydroxy-3-methylbut-2-enyl diphosphate + oxidized [flavodoxin] + H2O + 2 H(+) = 2-C-methyl-D-erythritol 2,4-cyclic diphosphate + reduced [flavodoxin]. It participates in isoprenoid biosynthesis; isopentenyl diphosphate biosynthesis via DXP pathway; isopentenyl diphosphate from 1-deoxy-D-xylulose 5-phosphate: step 5/6. Converts 2C-methyl-D-erythritol 2,4-cyclodiphosphate (ME-2,4cPP) into 1-hydroxy-2-methyl-2-(E)-butenyl 4-diphosphate. The chain is 4-hydroxy-3-methylbut-2-en-1-yl diphosphate synthase (flavodoxin) from Shigella dysenteriae serotype 1 (strain Sd197).